The sequence spans 202 residues: Polyamine-modulated factor 1 (202 aa).

Residues 1-15 (MAEVSRDSEAAERGP) are compositionally biased toward basic and acidic residues. The interval 1–26 (MAEVSRDSEAAERGPEGSSPEAVPGD) is disordered. The stretch at 153 to 194 (EAKNQELADAVLAGRRQVEELQQQVRALQQTWQALHREQREL) forms a coiled coil.

As to quaternary structure, component of the MIS12 complex composed of MIS12, DSN1, NSL1 and PMF1. Interacts with COPS7A. Interacts via its coiled-coil domain with the leucine-zipper domain of NFE2L2. The interaction with NFE2L2 is required for the transcriptional regulation of SSAT.

The protein localises to the nucleus. Its subcellular location is the chromosome. The protein resides in the centromere. It is found in the kinetochore. Functionally, part of the MIS12 complex which is required for normal chromosome alignment and segregation and for kinetochore formation during mitosis. May act as a cotranscription partner of NFE2L2 involved in regulation of polyamine-induced transcription of SSAT. The chain is Polyamine-modulated factor 1 from Mus musculus (Mouse).